A 307-amino-acid polypeptide reads, in one-letter code: Ribonuclease Z (307 aa).

Zn(2+) contacts are provided by His63, His65, Asp67, His68, His141, Asp212, and His270. Catalysis depends on Asp67, which acts as the Proton acceptor.

The protein belongs to the RNase Z family. Homodimer. The cofactor is Zn(2+).

The enzyme catalyses Endonucleolytic cleavage of RNA, removing extra 3' nucleotides from tRNA precursor, generating 3' termini of tRNAs. A 3'-hydroxy group is left at the tRNA terminus and a 5'-phosphoryl group is left at the trailer molecule.. In terms of biological role, zinc phosphodiesterase, which displays some tRNA 3'-processing endonuclease activity. Probably involved in tRNA maturation, by removing a 3'-trailer from precursor tRNA. The chain is Ribonuclease Z from Bacillus thuringiensis subsp. konkukian (strain 97-27).